The primary structure comprises 462 residues: Cytochrome P450 20A1 (462 aa).

Residues 4-24 (FAIFAVTFLLALVGAVLYLYP) form a helical membrane-spanning segment. C409 provides a ligand contact to heme.

It belongs to the cytochrome P450 family. Heme serves as cofactor.

It localises to the membrane. In Mus musculus (Mouse), this protein is Cytochrome P450 20A1 (Cyp20a1).